The following is a 345-amino-acid chain: Protein RecA (345 aa).

Residue 66 to 73 (GPESSGKT) coordinates ATP.

The protein belongs to the RecA family.

It is found in the cytoplasm. Can catalyze the hydrolysis of ATP in the presence of single-stranded DNA, the ATP-dependent uptake of single-stranded DNA by duplex DNA, and the ATP-dependent hybridization of homologous single-stranded DNAs. It interacts with LexA causing its activation and leading to its autocatalytic cleavage. The sequence is that of Protein RecA from Frankia casuarinae (strain DSM 45818 / CECT 9043 / HFP020203 / CcI3).